The following is a 969-amino-acid chain: Proprotein convertase subtilisin/kexin type 6 (969 aa).

The span at 1–16 (MPPRAPPAPGPRPPPR) shows a compositional bias: pro residues. Residues 1–39 (MPPRAPPAPGPRPPPRAAAATDTAAGAGGAGGAGGAGGP) form a disordered region. Positions 1-63 (MPPRAPPAPG…LLALPAACSA (63 aa)) are cleaved as a signal peptide. The segment covering 26 to 39 (GAGGAGGAGGAGGP) has biased composition (gly residues). Residues 64-149 (PPPRPVYTNH…QQEVKRRVKR (86 aa)) constitute a propeptide that is removed on maturation. The Peptidase S8 domain maps to 168-487 (MWYLHCGDKN…FGLVDAEALV (320 aa)). Active-site charge relay system residues include aspartate 205 and histidine 246. The N-linked (GlcNAc...) asparagine glycan is linked to asparagine 259. Serine 420 functions as the Charge relay system in the catalytic mechanism. The 141-residue stretch at 495-635 (AVPSQHMCVA…SLILYGTAEH (141 aa)) folds into the P/Homo B domain. Residues 553 to 555 (RGD) carry the Cell attachment site motif. Residues 658 to 683 (EPPKAALSPSQVEVPEDEEDYTAQST) are disordered. FU repeat units follow at residues 692 to 739 (TSVC…GYFG), 743 to 790 (ARRC…GFYA), 794 to 838 (QKNC…GTYF), 842 to 887 (LIRC…GFYP), and 895 to 943 (HKVC…ETFC). The tract at residues 695–930 (CHPECGDKGC…GFTQLGTSCI (236 aa)) is CRM (Cys-rich motif). N-linked (GlcNAc...) asparagine glycans are attached at residues asparagine 914 and asparagine 932. One can recognise a PLAC domain in the interval 931-969 (TNHTCSNADETFCEMVKSNRLCERKLFIQFCCRTCLLAG).

This sequence belongs to the peptidase S8 family. In terms of assembly, the PACE4A-I precursor protein seems to exist in the reticulum endoplasmic as both a monomer and a dimer-sized complex whereas mature PACE4A-I exists only as a monomer, suggesting that propeptide cleavage affects its tertiary or quaternary structure. Interacts (immature form including the propeptide) with RCN3; probably involved in the maturation and the secretion of PCSK6. The cofactor is Ca(2+). Each PACE4 isoform exhibits a unique restricted distribution. Isoform PACE4A-I is expressed in heart, brain, placenta, lung, skeletal muscle, kidney, pancreas, but at comparatively higher levels in the liver. Isoform PACE4A-II is at least expressed in placenta. Isoform PACE4B was only found in the embryonic kidney cell line from which it was isolated. Isoform PACE4C and isoform PACE4D are expressed in placenta. Isoform PACE4E-I is expressed in cerebellum, placenta and pituitary. Isoform PACE4E-II is at least present in cerebellum.

The protein resides in the secreted. It is found in the endoplasmic reticulum. Its subcellular location is the endomembrane system. In terms of biological role, serine endoprotease that processes various proproteins by cleavage at paired basic amino acids, recognizing the RXXX[KR]R consensus motif. Likely functions in the constitutive secretory pathway, with unique restricted distribution in both neuroendocrine and non-neuroendocrine tissues. This chain is Proprotein convertase subtilisin/kexin type 6 (PCSK6), found in Homo sapiens (Human).